A 185-amino-acid chain; its full sequence is Peptidyl-tRNA hydrolase (185 aa).

Tyr-14 serves as a coordination point for tRNA. The active-site Proton acceptor is the His-19. Phe-64, Asn-66, and Asn-112 together coordinate tRNA.

This sequence belongs to the PTH family. As to quaternary structure, monomer.

The protein localises to the cytoplasm. It catalyses the reaction an N-acyl-L-alpha-aminoacyl-tRNA + H2O = an N-acyl-L-amino acid + a tRNA + H(+). In terms of biological role, hydrolyzes ribosome-free peptidyl-tRNAs (with 1 or more amino acids incorporated), which drop off the ribosome during protein synthesis, or as a result of ribosome stalling. Its function is as follows. Catalyzes the release of premature peptidyl moieties from peptidyl-tRNA molecules trapped in stalled 50S ribosomal subunits, and thus maintains levels of free tRNAs and 50S ribosomes. This chain is Peptidyl-tRNA hydrolase, found in Lactobacillus johnsonii (strain CNCM I-12250 / La1 / NCC 533).